Here is a 92-residue protein sequence, read N- to C-terminus: Small ribosomal subunit protein uS19 (92 aa).

It belongs to the universal ribosomal protein uS19 family.

Functionally, protein S19 forms a complex with S13 that binds strongly to the 16S ribosomal RNA. This is Small ribosomal subunit protein uS19 from Tolumonas auensis (strain DSM 9187 / NBRC 110442 / TA 4).